A 71-amino-acid chain; its full sequence is Plasticin-DA1 (71 aa).

Positions 1–22 are cleaved as a signal peptide; that stretch reads MAFLKKSLFLVLFLALVPLSIC. A propeptide spanning residues 23 to 42 is cleaved from the precursor; that stretch reads EAEKREEENEEKQEDDDESE. The interval 25-45 is disordered; that stretch reads EKREEENEEKQEDDDESEKKR. The span at 30–40 shows a compositional bias: acidic residues; that stretch reads ENEEKQEDDDE. Residue Gly-68 is modified to Glycine amide. Positions 70 to 71 are excised as a propeptide; sequence ER.

The protein belongs to the frog skin active peptide (FSAP) family. Plasticin subfamily. Expressed by the skin glands.

The protein resides in the secreted. The protein localises to the target cell membrane. Functionally, neutral peptide with no antimicrobial activity. Does not permeate bacterial membranes. May act in synergy with cationic peptides by enhancing their activity. Has a moderate hemolytic activity. It interacts with zwitterionic phospholipids (DMPC) without perturbing either the interface or inside of the bilayer, whereas it causes little perturbations at the interface peptide-anionic vesicles (DMPG) as well as in the bilayer alkyl chains. The sequence is that of Plasticin-DA1 from Agalychnis dacnicolor (Giant Mexican leaf frog).